The following is a 278-amino-acid chain: Phosphonates import ATP-binding protein PhnC 1 (278 aa).

The ABC transporter domain occupies 5–253 (IRVDSLNKTF…FLNELYGAEG (249 aa)). 37-44 (GASGSGKS) is a binding site for ATP.

This sequence belongs to the ABC transporter superfamily. Phosphonates importer (TC 3.A.1.9.1) family. In terms of assembly, the complex is composed of two ATP-binding proteins (PhnC), two transmembrane proteins (PhnE) and a solute-binding protein (PhnD).

Its subcellular location is the cell inner membrane. It catalyses the reaction phosphonate(out) + ATP + H2O = phosphonate(in) + ADP + phosphate + H(+). Its function is as follows. Part of the ABC transporter complex PhnCDE involved in phosphonates import. Responsible for energy coupling to the transport system. This is Phosphonates import ATP-binding protein PhnC 1 from Pseudomonas aeruginosa (strain UCBPP-PA14).